We begin with the raw amino-acid sequence, 314 residues long: tRNA dimethylallyltransferase (314 aa).

Residues 1-24 (MAEEPQRSPAPTSPFAFTVPSNPL) are disordered. 40-47 (GPTASGKS) lines the ATP pocket. 42–47 (TASGKS) lines the substrate pocket.

Belongs to the IPP transferase family. Monomer. Requires Mg(2+) as cofactor.

The catalysed reaction is adenosine(37) in tRNA + dimethylallyl diphosphate = N(6)-dimethylallyladenosine(37) in tRNA + diphosphate. In terms of biological role, catalyzes the transfer of a dimethylallyl group onto the adenine at position 37 in tRNAs that read codons beginning with uridine, leading to the formation of N6-(dimethylallyl)adenosine (i(6)A). This Cereibacter sphaeroides (strain ATCC 17029 / ATH 2.4.9) (Rhodobacter sphaeroides) protein is tRNA dimethylallyltransferase.